Reading from the N-terminus, the 85-residue chain is Major outer membrane protein 1 (85 aa).

Residues 1-18 (MEAREVEEMRRSRLLTLG) form the signal peptide. A helical transmembrane segment spans residues 22–42 (YTAVIALAALVLVMGALGLVL).

Forms extremely stable complexes with apparent masses of 150, 50, 45 and 38 kDa. Found in a ring-shaped complex of 7 nm diameter with a 2 nm channel through the middle. Complete denaturation requires temperatures over 110 degrees Celsius.

It localises to the cell outer membrane. The most abundant protein of the outer membrane, it forms a pore through it. This Ignicoccus hospitalis (strain KIN4/I / DSM 18386 / JCM 14125) protein is Major outer membrane protein 1 (ihomp1).